Here is a 165-residue protein sequence, read N- to C-terminus: Protein SprT (165 aa).

A SprT-like domain is found at 20 to 163 (ENLAQANLKL…RCVHCGEPLV (144 aa)). Zn(2+) is bound at residue histidine 78. Residue glutamate 79 is part of the active site. Residue histidine 82 participates in Zn(2+) binding.

It belongs to the SprT family. Zn(2+) serves as cofactor.

It is found in the cytoplasm. The protein is Protein SprT of Salmonella arizonae (strain ATCC BAA-731 / CDC346-86 / RSK2980).